A 461-amino-acid chain; its full sequence is tRNA-splicing endonuclease subunit Sen2 (461 aa).

Disordered regions lie at residues 140–176 (GAEQ…TSSP) and 190–210 (GDPA…DVKE). Polar residues predominate over residues 144–176 (TGDSCDTVCPNTENTELSGQSSTDTGNIATSSP). Residues 201-210 (KEQEPADVKE) show a composition bias toward basic and acidic residues. Residues Tyr365, His373, and Lys412 contribute to the active site.

The protein belongs to the tRNA-intron endonuclease family. TRNA splicing endonuclease is a heterotetramer composed of SEN2, SEN15, SEN34/LENG5 and SEN54.

The protein resides in the nucleus. The catalysed reaction is pretRNA = a 3'-half-tRNA molecule with a 5'-OH end + a 5'-half-tRNA molecule with a 2',3'-cyclic phosphate end + an intron with a 2',3'-cyclic phosphate and a 5'-hydroxyl terminus.. Functionally, constitutes one of the two catalytic subunit of the tRNA-splicing endonuclease complex, a complex responsible for identification and cleavage of the splice sites in pre-tRNA. It cleaves pre-tRNA at the 5'- and 3'-splice sites to release the intron. The products are an intron and two tRNA half-molecules bearing 2',3'-cyclic phosphate and 5'-OH termini. There are no conserved sequences at the splice sites, but the intron is invariably located at the same site in the gene, placing the splice sites an invariant distance from the constant structural features of the tRNA body. Probably carries the active site for 5'-splice site cleavage. The tRNA splicing endonuclease is also involved in mRNA processing via its association with pre-mRNA 3'-end processing factors, establishing a link between pre-tRNA splicing and pre-mRNA 3'-end formation, suggesting that the endonuclease subunits function in multiple RNA-processing events. This is tRNA-splicing endonuclease subunit Sen2 (TSEN2) from Gallus gallus (Chicken).